The sequence spans 122 residues: Large ribosomal subunit protein bL19 (122 aa).

Belongs to the bacterial ribosomal protein bL19 family.

In terms of biological role, this protein is located at the 30S-50S ribosomal subunit interface and may play a role in the structure and function of the aminoacyl-tRNA binding site. In Chlamydia abortus (strain DSM 27085 / S26/3) (Chlamydophila abortus), this protein is Large ribosomal subunit protein bL19.